The primary structure comprises 201 residues: MIELLSESLEGLSAAMIAELGRYRHQVFIEKLGWDVVSTSRVRDQEFDQFDHPQTRYIVAMSRQGICGCARLLPTTDAYLLKDVFAYLCSETPPSDPSVWELSRYAASAADDPQLAMKIFWSSLQCAWYLGASSVVAVTTTAMERYFVRNGVILQRLGPPQKVKGETLVAISFPAYQERGLEMLLRYHPEWLQGVPLSMAV.

Belongs to the autoinducer synthase family.

The catalysed reaction is a fatty acyl-[ACP] + S-adenosyl-L-methionine = an N-acyl-L-homoserine lactone + S-methyl-5'-thioadenosine + holo-[ACP] + H(+). In terms of biological role, required for the synthesis of BHL (N-butanoyl-L-homoserine lactone), and HHL (N-hexanoyl-L-homoserine lactone) autoinducer molecules which bind to RhlR and thus acts in elastase biosynthesis regulation. The polypeptide is Acyl-homoserine-lactone synthase (rhlI) (Pseudomonas aeruginosa (strain ATCC 15692 / DSM 22644 / CIP 104116 / JCM 14847 / LMG 12228 / 1C / PRS 101 / PAO1)).